The primary structure comprises 491 residues: Calcium/calmodulin-dependent protein kinase type II delta 1 chain (491 aa).

The Protein kinase domain occupies 13-271 (YQLYEELGKG…AAEALKHPWI (259 aa)). ATP-binding positions include 19-27 (LGKGAFSVV) and lysine 42. Catalysis depends on aspartate 135, which acts as the Proton acceptor. Position 286 is a phosphothreonine (threonine 286). Phosphoserine is present on serine 314. Residues 315 to 354 (SKNPYKKPDGVKEPQTTVIHNPTDGNKESSESTNTTIEDE) form a disordered region. The span at 328–338 (PQTTVIHNPTD) shows a compositional bias: polar residues. Threonine 350 bears the Phosphothreonine mark.

This sequence belongs to the protein kinase superfamily. CAMK Ser/Thr protein kinase family. CaMK subfamily. CAMK2 is composed of four different chains: alpha, beta, gamma, and delta. The different isoforms assemble into homo- or heteromultimeric holoenzymes composed of 8 to 12 subunits. As to expression, first detected at the 18-somite stage where expression is restricted to somite boundaries. At 24 hpf, expression is elevated in epidermal tissue and in the hatching gland. After 24 hpf, expression dimishes, but persists at low levels along the dorsal trunk. At 48 hpf, expression is restricted at a low level to the forebrain. At 72 hpf, weak expression reappears along the entire dorsal trunk in discrete cell bodies.

It catalyses the reaction L-seryl-[protein] + ATP = O-phospho-L-seryl-[protein] + ADP + H(+). The enzyme catalyses L-threonyl-[protein] + ATP = O-phospho-L-threonyl-[protein] + ADP + H(+). Its activity is regulated as follows. Autophosphorylation of CAMK2 plays an important role in the regulation of the kinase activity. Its function is as follows. CaM-kinase II (CAMK2) is a prominent kinase in the central nervous system. This Danio rerio (Zebrafish) protein is Calcium/calmodulin-dependent protein kinase type II delta 1 chain.